The sequence spans 282 residues: 4-hydroxy-3-methylbut-2-enyl diphosphate reductase (282 aa).

C12 contacts [4Fe-4S] cluster. 2 residues coordinate (2E)-4-hydroxy-3-methylbut-2-enyl diphosphate: H40 and H72. The dimethylallyl diphosphate site is built by H40 and H72. Positions 40 and 72 each coordinate isopentenyl diphosphate. C94 is a [4Fe-4S] cluster binding site. H122 contributes to the (2E)-4-hydroxy-3-methylbut-2-enyl diphosphate binding site. Position 122 (H122) interacts with dimethylallyl diphosphate. H122 is an isopentenyl diphosphate binding site. Catalysis depends on E124, which acts as the Proton donor. (2E)-4-hydroxy-3-methylbut-2-enyl diphosphate is bound at residue T160. [4Fe-4S] cluster is bound at residue C188. (2E)-4-hydroxy-3-methylbut-2-enyl diphosphate contacts are provided by S216, N218, and S260. Residues S216, N218, and S260 each coordinate dimethylallyl diphosphate. Isopentenyl diphosphate is bound by residues S216, N218, and S260.

It belongs to the IspH family. [4Fe-4S] cluster serves as cofactor.

It carries out the reaction isopentenyl diphosphate + 2 oxidized [2Fe-2S]-[ferredoxin] + H2O = (2E)-4-hydroxy-3-methylbut-2-enyl diphosphate + 2 reduced [2Fe-2S]-[ferredoxin] + 2 H(+). It catalyses the reaction dimethylallyl diphosphate + 2 oxidized [2Fe-2S]-[ferredoxin] + H2O = (2E)-4-hydroxy-3-methylbut-2-enyl diphosphate + 2 reduced [2Fe-2S]-[ferredoxin] + 2 H(+). The protein operates within isoprenoid biosynthesis; dimethylallyl diphosphate biosynthesis; dimethylallyl diphosphate from (2E)-4-hydroxy-3-methylbutenyl diphosphate: step 1/1. It functions in the pathway isoprenoid biosynthesis; isopentenyl diphosphate biosynthesis via DXP pathway; isopentenyl diphosphate from 1-deoxy-D-xylulose 5-phosphate: step 6/6. Catalyzes the conversion of 1-hydroxy-2-methyl-2-(E)-butenyl 4-diphosphate (HMBPP) into a mixture of isopentenyl diphosphate (IPP) and dimethylallyl diphosphate (DMAPP). Acts in the terminal step of the DOXP/MEP pathway for isoprenoid precursor biosynthesis. This Geotalea uraniireducens (strain Rf4) (Geobacter uraniireducens) protein is 4-hydroxy-3-methylbut-2-enyl diphosphate reductase.